Consider the following 582-residue polypeptide: Vacuolar basic amino acid transporter 5 (582 aa).

The Cytoplasmic portion of the chain corresponds to 1–44 (MEETKYSSQQEIEGACGSDASLNARGSNDSPMGLSLYLCLASLT). The helical transmembrane segment at 45 to 65 (LVLFITALDILIVGTIIDVVA) threads the bilayer. Over 66–80 (EQFGNYSKTGWLVTG) the chain is Vacuolar. N-linked (GlcNAc...) asparagine glycosylation is present at N70. Residues 81 to 101 (YSLPNAILSLIWGRFASIIGF) traverse the membrane as a helical segment. At 102–104 (QHS) the chain is on the cytoplasmic side. Residues 105–125 (LILAILIFEAGSLIAALASSM) traverse the membrane as a helical segment. Over 126 to 132 (NMLIFGR) the chain is Vacuolar. A helical transmembrane segment spans residues 133 to 153 (VVAGVGGSGLQTLCFVIGCTM). The Cytoplasmic segment spans residues 154-160 (VGERSRP). The chain crosses the membrane as a helical span at residues 161-181 (LVISILSCAFAVAAIVGPIIG). Over 182–191 (GAFTTHVTWR) the chain is Vacuolar. Residues 192-212 (WCFYINLPIGGLAIIMFLLTY) traverse the membrane as a helical segment. Residues 213-256 (KAENKGILQQIKDAIGTISSFTFSKFRHQVNFKRLMNGIIFKFD) are Cytoplasmic-facing. Residues 257 to 277 (FFGFALCSAGLVLFLLGLTFG) traverse the membrane as a helical segment. Topologically, residues 278-287 (GNKYSWNSGQ) are vacuolar. The chain crosses the membrane as a helical span at residues 288 to 308 (VITYLVLGVLLFIFSLVYDFF). At 309–329 (LFDKFNPEPDNISYRPLLLRR) the chain is on the cytoplasmic side. Residues 330 to 350 (LVAKPAIIIVNMVTFLLCTGY) traverse the membrane as a helical segment. Residues 351–372 (NGQMIYSVQFFQLIFASSAWKA) are Vacuolar-facing. Residues 373-393 (GLHLIPIVITNVIAAIASGVI) traverse the membrane as a helical segment. Residues 394–401 (TKKLGLVK) are Cytoplasmic-facing. Residues 402 to 422 (PLLIFGGVLGVIGAGLMTLMT) traverse the membrane as a helical segment. An N-linked (GlcNAc...) asparagine glycan is attached at N423. Residues 423-430 (NTSTKSTQ) are Vacuolar-facing. A helical membrane pass occupies residues 431–451 (IGVLLLPGFSLGFALQASLMS). Residues 452 to 469 (AQLQITKDRPEAAMDFIE) are Cytoplasmic-facing. Residues 470-492 (VTAFNTFMKSLGTTLGGVLSTTV) traverse the membrane as a helical segment. At 493–539 (FSASFHNKVSRAHLEPYEGKTVDDMILYRLQNYDGSHSTIGNILSDS) the chain is on the vacuolar side. A helical membrane pass occupies residues 540 to 560 (IKNVFWMDLGFYALGFLFCSF). Residues 561 to 582 (SSNKKLIIPKKDDTPEDNLEDK) are Cytoplasmic-facing.

Belongs to the major facilitator superfamily.

It localises to the vacuole membrane. Transporter required for vacuolar uptake of basic amino acids. This is Vacuolar basic amino acid transporter 5 (VBA5) from Saccharomyces cerevisiae (strain ATCC 204508 / S288c) (Baker's yeast).